The sequence spans 458 residues: Transcription factor bHLH10 (458 aa).

A disordered region spans residues 1 to 49 (MEEERESLYEEMGCFDPNTPAEVTVESSFSQAEPPPPPPQVLVAGSTSN). Residues 243 to 292 (SRKSRTSPTERERRVHFNDRFFDLKNLIPNPTKIDRASIVGEAIDYIKEL) enclose the bHLH domain. A disordered region spans residues 315–338 (KRARVGEGGGGEDQEEEEDTVNYK). Residues 324-334 (GGEDQEEEEDT) show a composition bias toward acidic residues.

As to quaternary structure, homodimer.

It is found in the nucleus. This Arabidopsis thaliana (Mouse-ear cress) protein is Transcription factor bHLH10 (BHLH10).